A 752-amino-acid chain; its full sequence is MAHLLGSQACMESLRTDLTDLQGAIVDVFSRAGPVRFPSWKFPDRMACDLDMVALLEHYDHVPGDPEFTQLSHAVLLELVIDRLLLLLQSCMSYLENLGSEQMMPPAQAAGPCMSVGLTVRRFWDSLLRLGTLHQQPLPQKGANQRETPTSKPTTKGEPARSPEYLTTKLIKPSSPVLGLPQTCQEPESIPVRASLQFPATTFKNTRSVHSQTIETALVPCDACASVQGSLQKVGKVVISLCQSQNLPSSLGQFQQLVQDSMGLRPLPAATVGRWAAEQRKDLTRLSKHVEALRAQLEEAEGQKDGLRKQAGKLEQALKQEQGARRRQAEEDEQCLSEWEHDKQQLLTETSDLKTKMATLERELKQQRESTQAVEAKAQQLQEEGERRAAAERQVQQLEEQVQQLEAQVQLLVGRLEGAGQQVCWASTELDKEKARVDSMVRHQESLQAKQRALLKQLDSLDQEREELRGSLDEAEAQRARVEEQLQSEREQGQCQLRAQQELLQSLQREKQGLEQATTDLRLTILELERELEELKERERLLVAFPDLHRPTETQIHGGRSSSVESQITCPTDSGNVTDHMERQVQSNDIRIRVLQEENGRLQSMLSKIREVAQQGGLKLIPQDRLWSPSSKGTQGATPPVQAKSTSPGPLGRQHLPSSRTGRTLLGQPCTSPPRQPCTSPPRQPCTSPPRQPCTSPSRQPCSQPSKSLLEGVTHLDTCTQNPIKVLVRLRKRLSPGRGQASSAHQPQERPM.

The span at 135–154 shows a compositional bias: polar residues; sequence QQPLPQKGANQRETPTSKPT. Disordered regions lie at residues 135-163 and 316-336; these read QQPL…ARSP and QALK…EQCL. Coiled-coil stretches lie at residues 276–544 and 579–615; these read AAEQ…LLVA and DHME…VAQQ. A compositionally biased stretch (basic and acidic residues) spans 316–329; it reads QALKQEQGARRRQA. 2 disordered regions span residues 620-707 and 731-752; these read LIPQ…QPSK and RKRL…ERPM. Polar residues predominate over residues 628 to 648; sequence SPSSKGTQGATPPVQAKSTSP. Positions 671-692 are enriched in pro residues; sequence TSPPRQPCTSPPRQPCTSPPRQ. Residues 693 to 707 are compositionally biased toward polar residues; the sequence is PCTSPSRQPCSQPSK.

The polypeptide is Coiled-coil domain-containing protein 157 (CCDC157) (Homo sapiens (Human)).